The sequence spans 37 residues: Large ribosomal subunit protein bL36 (37 aa).

It belongs to the bacterial ribosomal protein bL36 family.

The polypeptide is Large ribosomal subunit protein bL36 (Acidothermus cellulolyticus (strain ATCC 43068 / DSM 8971 / 11B)).